The sequence spans 469 residues: Ribosomal protein uS12 methylthiotransferase RimO (469 aa).

Residues 17–132 (PRVGFVSLGC…VMDAVHLNLP (116 aa)) form the MTTase N-terminal domain. Positions 26, 62, 91, 167, 171, and 174 each coordinate [4Fe-4S] cluster. Positions 153 to 395 (LTPKHYAYLK…AVAEEVSSLK (243 aa)) constitute a Radical SAM core domain. In terms of domain architecture, TRAM spans 397 to 469 (QQRVGATMQV…QGHDLVAIPV (73 aa)).

It belongs to the methylthiotransferase family. RimO subfamily. The cofactor is [4Fe-4S] cluster.

The protein resides in the cytoplasm. It carries out the reaction L-aspartate(89)-[ribosomal protein uS12]-hydrogen + (sulfur carrier)-SH + AH2 + 2 S-adenosyl-L-methionine = 3-methylsulfanyl-L-aspartate(89)-[ribosomal protein uS12]-hydrogen + (sulfur carrier)-H + 5'-deoxyadenosine + L-methionine + A + S-adenosyl-L-homocysteine + 2 H(+). Catalyzes the methylthiolation of an aspartic acid residue of ribosomal protein uS12. In Polaromonas sp. (strain JS666 / ATCC BAA-500), this protein is Ribosomal protein uS12 methylthiotransferase RimO.